A 154-amino-acid polypeptide reads, in one-letter code: Large ribosomal subunit protein uL22 (154 aa).

It belongs to the universal ribosomal protein uL22 family. Part of the 50S ribosomal subunit.

This protein binds specifically to 23S rRNA. It makes multiple contacts with different domains of the 23S rRNA in the assembled 50S subunit and ribosome. In terms of biological role, the globular domain of the protein is located near the polypeptide exit tunnel on the outside of the subunit, while an extended beta-hairpin is found that lines the wall of the exit tunnel in the center of the 70S ribosome. The protein is Large ribosomal subunit protein uL22 of Methanosphaera stadtmanae (strain ATCC 43021 / DSM 3091 / JCM 11832 / MCB-3).